The chain runs to 510 residues: DNA nucleotidylexotransferase (510 aa).

The interval 1-22 (MDPLQAVHLGPRKKRPRQLGTP) is disordered. The short motif at 11–17 (PRKKRPR) is the Nuclear localization signal element. The BRCT domain maps to 27-124 (PYDIRFRDLV…KPVEMMGRHQ (98 aa)). Serine 134 carries the post-translational modification Phosphoserine. The tract at residues 151–510 (SQYACQRRTT…DYIEPWERNA (360 aa)) is mediates interaction with DNTTIP2. An involved in DNA binding region spans residues 258–262 (VGLKT). A 2'-deoxyribonucleoside 5'-triphosphate is bound by residues 333–338 (GFRRGK) and 342–345 (HDVD). Positions 343, 345, and 434 each coordinate Mg(2+). 449-450 (GW) provides a ligand contact to a 2'-deoxyribonucleoside 5'-triphosphate.

Belongs to the DNA polymerase type-X family. As to quaternary structure, interacts with PRP19 and DNTTIP1. Forms a ternary complex with DNTTIP2 and core histone. Released from this complex by PCNA. Interacts with TRERF1. Mg(2+) is required as a cofactor. In terms of tissue distribution, isoform TDT-L: Expressed in the thymus, and, at lower levels, in the bone marrow. Detected in both cycling and noncycling pro-B and pre-B cells (at protein level). Isoform TDT-S: Expressed in both cycling and noncycling pro-B, but not pre-B, cells (at protein level). Not detected in mature peripheral or germinal center B cells.

The protein localises to the nucleus. Its subcellular location is the cytoplasm. The catalysed reaction is DNA(n) + a 2'-deoxyribonucleoside 5'-triphosphate = DNA(n+1) + diphosphate. Functionally, transferase that catalyzes the nontemplated addition of nucleoside triphosphate to coding ends during V(D)J recombination (N addition). Involved in the generation of diversity in the antigen-binding region of immunoglobulin heavy and light chains and T-cell receptors during B- and T-cell development. Does not act on double-stranded DNA with blunt ends. In terms of biological role, 3'-to-5' DNA exonuclease. Involved in the generation of diversity in the antigen-binding region of immunoglobulin heavy and light chains and T-cell receptors during B- and T-cell development. Acts on single-stranded and double-stranded DNA with 3' or 5' extensions, but not on double-stranded DNA with blunt ends. Attenuates not only isoform TDT-S-catalyzed N addition, but also P (palindromic) addition in coding joins. Lacks terminal transferase activity. This chain is DNA nucleotidylexotransferase (Dntt), found in Mus musculus (Mouse).